Consider the following 423-residue polypeptide: Methanol:N,N-dimethyl-4-nitrosoaniline oxidoreductase (423 aa).

This sequence belongs to the iron-containing alcohol dehydrogenase family. As to quaternary structure, homodecamer. Requires Mg(2+) as cofactor. The cofactor is Zn(2+). It depends on NADPH as a cofactor.

It carries out the reaction methanol + A = formaldehyde + AH2. In terms of biological role, catalyzes the oxidation of methanol to yield formaldehyde. While the in vivo electron acceptor is not known, N,N-dimethyl-4-nitrosoaniline (NDMA) can serve this function in vitro and is reduced to 4-(hydroxylamino)-N,N-dimethylaniline. It is also able to use ethanol and formaldehyde with an activity comparable to methanol, and has a weak activity with methylamine as substrate. In Mycobacterium sp. (strain DSM 3803 / JC1), this protein is Methanol:N,N-dimethyl-4-nitrosoaniline oxidoreductase.